The sequence spans 357 residues: Histidinol-phosphate aminotransferase (357 aa).

Lysine 218 carries the post-translational modification N6-(pyridoxal phosphate)lysine.

This sequence belongs to the class-II pyridoxal-phosphate-dependent aminotransferase family. Histidinol-phosphate aminotransferase subfamily. As to quaternary structure, homodimer. Pyridoxal 5'-phosphate is required as a cofactor.

The enzyme catalyses L-histidinol phosphate + 2-oxoglutarate = 3-(imidazol-4-yl)-2-oxopropyl phosphate + L-glutamate. It participates in amino-acid biosynthesis; L-histidine biosynthesis; L-histidine from 5-phospho-alpha-D-ribose 1-diphosphate: step 7/9. The sequence is that of Histidinol-phosphate aminotransferase from Chlorobium luteolum (strain DSM 273 / BCRC 81028 / 2530) (Pelodictyon luteolum).